The primary structure comprises 386 residues: Succinate--CoA ligase [ADP-forming] subunit beta (386 aa).

ATP-binding positions include Lys-46, 53–55, Glu-99, Ala-102, and Glu-107; that span reads GRG. Positions 199 and 213 each coordinate Mg(2+). Residues Asn-264 and 321–323 contribute to the substrate site; that span reads GIV.

Belongs to the succinate/malate CoA ligase beta subunit family. Heterotetramer of two alpha and two beta subunits. Requires Mg(2+) as cofactor.

It carries out the reaction succinate + ATP + CoA = succinyl-CoA + ADP + phosphate. The enzyme catalyses GTP + succinate + CoA = succinyl-CoA + GDP + phosphate. Its pathway is carbohydrate metabolism; tricarboxylic acid cycle; succinate from succinyl-CoA (ligase route): step 1/1. Functionally, succinyl-CoA synthetase functions in the citric acid cycle (TCA), coupling the hydrolysis of succinyl-CoA to the synthesis of either ATP or GTP and thus represents the only step of substrate-level phosphorylation in the TCA. The beta subunit provides nucleotide specificity of the enzyme and binds the substrate succinate, while the binding sites for coenzyme A and phosphate are found in the alpha subunit. The chain is Succinate--CoA ligase [ADP-forming] subunit beta from Actinobacillus succinogenes (strain ATCC 55618 / DSM 22257 / CCUG 43843 / 130Z).